Reading from the N-terminus, the 136-residue chain is Histone H3.2 (136 aa).

The disordered stretch occupies residues 1-43 (MARTKQTARKSTGGKAPRKQLATKAARKSAPATGGVKKPHRFR). Residue K5 is modified to N6-methylated lysine. Position 10 is an N6-acetyllysine; alternate (K10). K10 is subject to N6-methylated lysine; alternate. A Phosphoserine modification is found at S11. T12 is subject to Phosphothreonine. Position 15 is an N6-acetyllysine (K15). K19 and K24 each carry N6-acetyllysine; alternate. 2 positions are modified to N6-methylated lysine; alternate: K19 and K24. At K28 the chain carries N6-methylated lysine. S29 is modified (phosphoserine). K37 carries the N6-methylated lysine modification.

It belongs to the histone H3 family. As to quaternary structure, the nucleosome is a histone octamer containing two molecules each of H2A, H2B, H3 and H4 assembled in one H3-H4 heterotetramer and two H2A-H2B heterodimers. The octamer wraps approximately 147 bp of DNA. Acetylation is generally linked to gene activation. Can be acetylated to form H3K9ac, H3K14ac, H3K18ac and H3K23ac. H3K9ac could compete with H3K9me and prevent gene silencing. H3K9ac is restricted to euchromatin. Post-translationally, methylated to form mainly H3K4me, H3K9me, H3K18me, H3K23me, H3K27me and H3K36me. H3K4me1/2/3, H3K9me3, H3K27me3 and H3K36me1/2/3 are typical marks for euchromatin, whereas heterochromatic chromocenters are enriched in H3K9me1/2 and H3K27me1/2. H2BK143ub1 is probably prerequisite for H3K4me. In terms of processing, can be phosphorylated to form H3S10ph, H3T11ph and H3S28ph.

It localises to the nucleus. It is found in the chromosome. Its function is as follows. Core component of nucleosome. Nucleosomes wrap and compact DNA into chromatin, limiting DNA accessibility to the cellular machineries which require DNA as a template. Histones thereby play a central role in transcription regulation, DNA repair, DNA replication and chromosomal stability. DNA accessibility is regulated via a complex set of post-translational modifications of histones, also called histone code, and nucleosome remodeling. The polypeptide is Histone H3.2 (Triticum aestivum (Wheat)).